The sequence spans 216 residues: Octanoyltransferase (216 aa).

The region spanning 24 to 212 is the BPL/LPL catalytic domain; it reads KFRKECILFL…NLCSFLEPIN (189 aa). Residues 69 to 76, 140 to 142, and 153 to 155 contribute to the substrate site; these read RGGDFTAH, SIG, and GIA. Cysteine 171 acts as the Acyl-thioester intermediate in catalysis.

Belongs to the LipB family.

It is found in the cytoplasm. It carries out the reaction octanoyl-[ACP] + L-lysyl-[protein] = N(6)-octanoyl-L-lysyl-[protein] + holo-[ACP] + H(+). It participates in protein modification; protein lipoylation via endogenous pathway; protein N(6)-(lipoyl)lysine from octanoyl-[acyl-carrier-protein]: step 1/2. Catalyzes the transfer of endogenously produced octanoic acid from octanoyl-acyl-carrier-protein onto the lipoyl domains of lipoate-dependent enzymes. Lipoyl-ACP can also act as a substrate although octanoyl-ACP is likely to be the physiological substrate. The protein is Octanoyltransferase of Leptospira interrogans serogroup Icterohaemorrhagiae serovar Lai (strain 56601).